The chain runs to 145 residues: Transcription antitermination protein NusB (145 aa).

Belongs to the NusB family.

Involved in transcription antitermination. Required for transcription of ribosomal RNA (rRNA) genes. Binds specifically to the boxA antiterminator sequence of the ribosomal RNA (rrn) operons. This chain is Transcription antitermination protein NusB, found in Burkholderia vietnamiensis (strain G4 / LMG 22486) (Burkholderia cepacia (strain R1808)).